A 414-amino-acid polypeptide reads, in one-letter code: Ribulose bisphosphate carboxylase large chain (414 aa).

Substrate contacts are provided by N101 and T151. K153 acts as the Proton acceptor in catalysis. Substrate is bound at residue K155. The Mg(2+) site is built by K179, D181, and E182. The residue at position 179 (K179) is an N6-carboxylysine. H272 serves as the catalytic Proton acceptor. Residues R273, H305, and S357 each contribute to the substrate site.

The protein belongs to the RuBisCO large chain family. Type I subfamily. Heterohexadecamer of 8 large chains and 8 small chains; disulfide-linked. The disulfide link is formed within the large subunit homodimers. Mg(2+) serves as cofactor. In terms of processing, the disulfide bond which can form in the large chain dimeric partners within the hexadecamer appears to be associated with oxidative stress and protein turnover.

It localises to the plastid. It is found in the chloroplast. It catalyses the reaction 2 (2R)-3-phosphoglycerate + 2 H(+) = D-ribulose 1,5-bisphosphate + CO2 + H2O. It carries out the reaction D-ribulose 1,5-bisphosphate + O2 = 2-phosphoglycolate + (2R)-3-phosphoglycerate + 2 H(+). Its function is as follows. RuBisCO catalyzes two reactions: the carboxylation of D-ribulose 1,5-bisphosphate, the primary event in carbon dioxide fixation, as well as the oxidative fragmentation of the pentose substrate in the photorespiration process. Both reactions occur simultaneously and in competition at the same active site. The sequence is that of Ribulose bisphosphate carboxylase large chain (rbcL) from Onychium japonicum (Japanese claw fern).